Reading from the N-terminus, the 160-residue chain is MIP18 family protein F45G2.10 (160 aa).

Positions 1 to 32 (MGQERLDNANPTLFDSKPRHRPVTGTERDESV) are disordered.

The protein belongs to the MIP18 family.

Its function is as follows. May play a role in chromosome segregation through establishment of sister chromatid cohesion. The chain is MIP18 family protein F45G2.10 from Caenorhabditis elegans.